The sequence spans 89 residues: Small ribosomal subunit protein uS15 (89 aa).

It belongs to the universal ribosomal protein uS15 family. As to quaternary structure, part of the 30S ribosomal subunit. Forms a bridge to the 50S subunit in the 70S ribosome, contacting the 23S rRNA.

In terms of biological role, one of the primary rRNA binding proteins, it binds directly to 16S rRNA where it helps nucleate assembly of the platform of the 30S subunit by binding and bridging several RNA helices of the 16S rRNA. Its function is as follows. Forms an intersubunit bridge (bridge B4) with the 23S rRNA of the 50S subunit in the ribosome. This Chromohalobacter salexigens (strain ATCC BAA-138 / DSM 3043 / CIP 106854 / NCIMB 13768 / 1H11) protein is Small ribosomal subunit protein uS15.